A 611-amino-acid chain; its full sequence is Chaperone protein HtpG (611 aa).

Residues 1–326 are a; substrate-binding; that stretch reads MSETLERHAF…TEDLPLNVSR (326 aa). The interval 327–536 is b; the sequence is EMLQATPVLA…SGGPDLQMQR (210 aa). The segment at 537–611 is c; it reads LLRRAGRGFG…RVAAALAAQA (75 aa).

It belongs to the heat shock protein 90 family. As to quaternary structure, homodimer.

The protein localises to the cytoplasm. Functionally, molecular chaperone. Has ATPase activity. In Methylobacterium sp. (strain 4-46), this protein is Chaperone protein HtpG.